The chain runs to 195 residues: dCTP deaminase (195 aa).

DCTP is bound by residues 110 to 115 (RSSLAR), aspartate 128, 136 to 138 (VLE), tyrosine 171, lysine 178, and glutamine 182. Glutamate 138 serves as the catalytic Proton donor/acceptor. The interval 171–195 (YSSRKDAKYKNQQSAVASRIDEDKE) is disordered.

This sequence belongs to the dCTP deaminase family. As to quaternary structure, homotrimer.

It carries out the reaction dCTP + H2O + H(+) = dUTP + NH4(+). It functions in the pathway pyrimidine metabolism; dUMP biosynthesis; dUMP from dCTP (dUTP route): step 1/2. Its function is as follows. Catalyzes the deamination of dCTP to dUTP. In Haemophilus influenzae (strain ATCC 51907 / DSM 11121 / KW20 / Rd), this protein is dCTP deaminase.